We begin with the raw amino-acid sequence, 225 residues long: UPF0758 protein BCB4264_A4572 (225 aa).

Residues 103–225 form the MPN domain; it reads SIRSPEDCAK…FVSLKEKGHI (123 aa). His-174, His-176, and Asp-187 together coordinate Zn(2+). The short motif at 174-187 is the JAMM motif element; sequence HNHPSGDPTPSRED.

Belongs to the UPF0758 family.

The polypeptide is UPF0758 protein BCB4264_A4572 (Bacillus cereus (strain B4264)).